Here is a 530-residue protein sequence, read N- to C-terminus: Capsid protein VP1 (530 aa).

The tract at residues 1–20 (MMMASKDATSSVDGASGAGQ) is disordered. Positions 1–225 (MMMASKDATS…FLFLVPPTVE (225 aa)) are shell domain. Residues 226 to 278 (QKTRPFTLPNLPLSSLSNSRAPLPISSMGISPDNVQSVQFQNGRCTLDGRLVG) form a P1 sub-domain 1 region. The tract at residues 226 to 530 (QKTRPFTLPN…SARGRLGLRR (305 aa)) is protruding domain. The interval 279-405 (TTPVSLSHVA…GSSITEATHL (127 aa)) is P2 sub-domain. Residues 406-530 (APSVYPPGFG…SARGRLGLRR (125 aa)) form a P1 sub-domain 2 region. The interval 523-530 (RGRLGLRR) is plays a role in binding to host histo-blood group structures antigens and in the formation of P-particles.

The protein belongs to the caliciviridae capsid protein family. Homodimer. Homomultimer. Interacts with the minor capsid protein VP2. Interacts (via C-terminus) with host type I histo-blood group structures antigens at the surface of target cells. Post-translationally, may be cleaved by host protease to generate soluble capsid protein. Assembled capsid cannot be cleaved.

The protein resides in the virion. It is found in the host cytoplasm. Its function is as follows. Capsid protein self assembles to form an icosahedral capsid with a T=3 symmetry, about 38 nm in diameter, and consisting of 180 capsid proteins. A smaller form of capsid with a diameter of 23 nm might be capsid proteins assembled as icosahedron with T=1 symmetry. The capsid encapsulates the genomic RNA and is decorated with VP2 proteins. Attaches virion to target cells by binding histo-blood group antigens (HBGAs) present on gastroduodenal epithelial cells. The soluble capsid protein may play a role in viral immunoevasion. The sequence is that of Capsid protein VP1 from Norovirus (strain Human/NoV/United States/Norwalk/1968/GI) (Hu/NV/NV/1968/US).